The following is a 439-amino-acid chain: Sequestosome-1 (439 aa).

Alanine 2 carries the N-acetylalanine modification. Residues 2–48 (ASLTVKAYLLGKEEAAREIRRFSFCFSPEPEAEAAAGPGPCERLLSR) are interaction with LCK. The PB1 domain occupies 3 to 100 (SLTVKAYLLG…DIFRIYIKEK (98 aa)). Serine 24 carries the phosphoserine modification. The interaction with PRKCZ and dimerization stretch occupies residues 41–105 (PCERLLSRVA…YIKEKKECRR (65 aa)). The interaction with PAWR stretch occupies residues 48–78 (RVAVLFPALRPGGFQAHYRDEDGDLVAFSSD). Residues 119-221 (VHPNVICDGC…DGRPCPTAES (103 aa)) form an interaction with GABRR3 region. The segment at 120–170 (HPNVICDGCNGPVVGTRYKCSVCPDYDLCSVCEGKGLHREHSKLIFPNPFG) adopts a ZZ-type zinc-finger fold. Residues cysteine 125, cysteine 128, cysteine 139, and cysteine 142 each coordinate Zn(2+). At tyrosine 145 the chain carries Phosphotyrosine. The Zn(2+) site is built by cysteine 148, cysteine 151, histidine 157, and histidine 160. Residues 167 to 217 (NPFGHLSDSFSHSRWLRKLKHGHFGWPGWEMGPPGNWSPRPPRAGDGRPCP) are LIM protein-binding. 3 positions are modified to phosphoserine: serine 173, serine 175, and serine 204. The disordered stretch occupies residues 201–231 (GNWSPRPPRAGDGRPCPTAESASAPSEDPNV). A TRAF6-binding motif is present at residues 225–230 (PSEDPN). Phosphoserine occurs at positions 246 and 263. The disordered stretch occupies residues 259–389 (GGKRSRLTPT…ALYPHLPPEA (131 aa)). A compositionally biased stretch (polar residues) spans 265–292 (LTPTSAESSSTGTEDKSGTQPSSCSSEV). At threonine 266 the chain carries Phosphothreonine. Residues 266-439 (TPTSAESSST…IQYSKHPPPL (174 aa)) form an interaction with NTRK1 region. Phosphoserine is present on residues serine 269 and serine 281. Residue cysteine 288 is the site of S-palmitoyl cysteine attachment. Residues serine 305, serine 327, and serine 331 each carry the phosphoserine modification. The MAP1LC3B-binding stretch occupies residues 320-341 (QPEELMESDNCSGGDDDWTHLS). Residues 335-340 (DDWTHL) carry the LIR motif. Basic and acidic residues predominate over residues 336–346 (DWTHLSSKEVD). Residues 346 to 351 (DPSTGE) form an interaction with KEAP1 region. Residues serine 348, serine 354, serine 360, serine 364, and serine 365 each carry the phosphoserine modification. Residues 350 to 372 (GELQSLQMPESEGPSSLDPSQEG) show a composition bias toward polar residues. Residues 388-433 (EADPRLIESLSQMLSMGFSDEGGWLTRLLQTKNYDIGAALDTIQYS) form the UBA domain. Serine 402 bears the Phosphoserine; by ULK1 and TBK1 mark. At serine 406 the chain carries Phosphoserine. N6-acetyllysine; alternate is present on residues lysine 419 and lysine 434. Lysine 419 participates in a covalent cross-link: Glycyl lysine isopeptide (Lys-Gly) (interchain with G-Cter in ubiquitin); alternate. Lysine 434 is covalently cross-linked (Glycyl lysine isopeptide (Lys-Gly) (interchain with G-Cter in SUMO2); alternate).

As to quaternary structure, homooligomer or heterooligomer; may form homotypic arrays. Dimerization interferes with ubiquitin binding. Component of a ternary complex with PAWR and PRKCZ. Forms a complex with JUB/Ajuba, PRKCZ and TRAF6. Identified in a complex with TRAF6 and CYLD. Identified in a heterotrimeric complex with ubiquitin and ZFAND5, where ZFAND5 and SQSTM1 both interact with the same ubiquitin molecule. Interacts (via LIR motif) with MAP1LC3A and MAP1LC3B, as well as with other ATG8 family members, including GABARAP, GABARAPL1 and GABARAPL2; these interactions are necessary for the recruitment MAP1 LC3 family members to inclusion bodies containing polyubiquitinated protein aggregates and for their degradation by autophagy. Interacts directly with PRKCI and PRKCZ. Interacts with EBI3, LCK, RASA1, NR2F2, NTRK1, NTRK2, NTRK3, NBR1, MAP2K5 and MAPKAPK5. Upon TNF-alpha stimulation, interacts with RIPK1 probably bridging IKBKB to the TNF-R1 complex composed of TNF-R1/TNFRSF1A, TRADD and RIPK1. Interacts with the proteasome subunits PSMD4 and PSMC2. Interacts with TRAF6. Interacts with 'Lys-63'-linked polyubiquitinated MAPT/TAU. Interacts with FHOD3. Interacts with CYLD. Interacts with SESN1. Interacts with SESN2. Interacts with ULK1. Interacts with UBD. Interacts with WDR81; the interaction is direct and regulates the interaction of SQSTM1 with ubiquitinated proteins. Interacts with WDFY3; this interaction is required to recruit WDFY3 to cytoplasmic bodies and to PML bodies. Interacts with LRRC25. Interacts with STING1; leading to relocalization of STING1 to autophagosomes. Interacts (when phosphorylated at Ser-348) with KEAP1; the interaction is direct and inactivates the BCR(KEAP1) complex by sequestering KEAP1 in inclusion bodies, promoting its degradation. Interacts with MOAP1; promoting dissociation of SQSTM1 inclusion bodies that sequester KEAP1. Interacts with GBP1. Interacts with TAX1BP1. Interacts with (ubiquitinated) PEX5; specifically binds PEX5 ubiquitinated at 'Lys-209' in response to reactive oxygen species (ROS). Interacts (via PB1 domain) with TNS2; the interaction leads to sequestration of TNS2 in cytoplasmic aggregates with SQSTM1 and promotes TNS2 ubiquitination and proteasomal degradation. Interacts with IRS1; the interaction is disrupted by the presence of tensin TNS2. Interacts with TRIM5. Interacts with TRIM11 (when ubiquitinated); promoting AIM2 recruitment to autophagosomes and autophagy-dependent degradation of AIM2. Interacts with TRIM13. Interacts with TRIM16. Interacts with TRIM23. Interacts with TRIM50. Interacts with TRIM55. Interacts with ECSIT; this interaction inhibits TLR4 signaling via functional regulation of the TRAF6-ECSIT complex. Interacts with GABRR1, GABRR2 and GABRR3. Interacts with WDR83. Interacts with GRB2. Interacts with USP12; the interaction is independent of USP12 deubiquitinase activity and may be involved in regulation of autophagic flux. Interacts with ASB6. In terms of processing, phosphorylated. Phosphorylation at Ser-406 by ULK1 destabilizes the UBA dimer interface and increases binding affinity to ubiquitinated proteins. Phosphorylation at Ser-406 also primes for subsequent phosphorylation at Ser-402. Phosphorylation at Ser-402 by CK2 or ULK1 promotes binding to ubiquitinated proteins by increasing the affinity between the UBA domain and polyubiquitin chains. Phosphorylation at Ser-402 by ULK1 is stimulated by SESN2. Phosphorylated at Ser-402 by TBK1, leading to promote relocalization of 'Lys-63'-linked ubiquitinated STING1 to autophagosomes. Phosphorylation at Ser-348 by ULK1 promotes interaction with KEAP1 and inactivation of the BCR(KEAP1) complex, promoting NFE2L2/NRF2 nuclear accumulation and expression of phase II detoxifying enzymes. Phosphorylated in vitro by TTN. Ubiquitinated by UBE2J1 and RNF26 at Lys-434: ubiquitinated SQSTM1 attracts specific vesicle-associated adapters, forming a molecular bridge that restrains cognate vesicles in the perinuclear region and organizes the endosomal pathway for efficient cargo transport. Ubiquitination by UBE2D2 and UBE2D3 increases its ability to bind polyubiquitin chains by destabilizing the UBA dimer interface. Deubiquitination by USP15 releases target vesicles for fast transport into the cell periphery. Ubiquitinated by the BCR(KEAP1) complex at Lys-419, increasing SQSTM1 sequestering activity and promoting its degradation. Ubiquitinated via 'Lys-29' and 'Lys-33'-linked polyubiquitination leading to xenophagic targeting of bacteria and inhibition of their replication. Post-translationally, acetylated at Lys-419 and Lys-434 by KAT5/TIP60, promotes activity by destabilizing the UBA dimer interface and increases binding affinity to ubiquitinated proteins. Deacetylated by HDAC6. In terms of processing, palmitoylation at Cys-288 by ZDHHC19 is required for efficient autophagic degradation of SQSTM1-cargo complexes by promoting affinity for ATG8 proteins and recruitment of p62 bodies to autophagosomes. Dealmitoylated at Cys-288 by LYPLA1. In terms of tissue distribution, ubiquitously expressed. In brain, mainly expressed by neurons, especially pyramidal neurons in the cerebral cortex and hippocampus. Also expressed by Purkinje cells and neurons in the dentate nucleus of the cerebellum and neurons of the basal ganglia (at protein level).

It localises to the cytoplasmic vesicle. It is found in the autophagosome. Its subcellular location is the preautophagosomal structure. The protein resides in the cytoplasm. The protein localises to the cytosol. It localises to the nucleus. It is found in the PML body. Its subcellular location is the late endosome. The protein resides in the lysosome. The protein localises to the endoplasmic reticulum. It localises to the myofibril. It is found in the sarcomere. Molecular adapter required for selective macroautophagy (aggrephagy) by acting as a bridge between polyubiquitinated proteins and autophagosomes. Promotes the recruitment of ubiquitinated cargo proteins to autophagosomes via multiple domains that bridge proteins and organelles in different steps. SQSTM1 first mediates the assembly and removal of ubiquitinated proteins by undergoing liquid-liquid phase separation upon binding to ubiquitinated proteins via its UBA domain, leading to the formation of insoluble cytoplasmic inclusions, known as p62 bodies. SQSTM1 then interacts with ATG8 family proteins on autophagosomes via its LIR motif, leading to p62 body recruitment to autophagosomes, followed by autophagic clearance of ubiquitinated proteins. SQSTM1 is itself degraded along with its ubiquitinated cargos. Also required to recruit ubiquitinated proteins to PML bodies in the nucleus. Also involved in autophagy of peroxisomes (pexophagy) in response to reactive oxygen species (ROS) by acting as a bridge between ubiquitinated PEX5 receptor and autophagosomes. Acts as an activator of the NFE2L2/NRF2 pathway via interaction with KEAP1: interaction inactivates the BCR(KEAP1) complex by sequestering the complex in inclusion bodies, promoting nuclear accumulation of NFE2L2/NRF2 and subsequent expression of cytoprotective genes. Promotes relocalization of 'Lys-63'-linked ubiquitinated STING1 to autophagosomes. Involved in endosome organization by retaining vesicles in the perinuclear cloud: following ubiquitination by RNF26, attracts specific vesicle-associated adapters, forming a molecular bridge that restrains cognate vesicles in the perinuclear region and organizes the endosomal pathway for efficient cargo transport. Sequesters tensin TNS2 into cytoplasmic puncta, promoting TNS2 ubiquitination and proteasomal degradation. May regulate the activation of NFKB1 by TNF-alpha, nerve growth factor (NGF) and interleukin-1. May play a role in titin/TTN downstream signaling in muscle cells. Adapter that mediates the interaction between TRAF6 and CYLD. Its function is as follows. More potent than isoform 2 to stimulate PRKCZ-dependent phosphorylation of KCNAB2. The protein is Sequestosome-1 (Sqstm1) of Rattus norvegicus (Rat).